Consider the following 186-residue polypeptide: MMELQGKFLIAMPHLDDYFNRTVVFMCEHNEQGSMGLVINQPTDLSIAELYSKLNFMMKNDRTFGNEMVVAGGPVHTERGFILHKNTLNAFQHTYKVTEELSMTTSADVVETLGSTFAPEKYLVALGCSSWGAGQLEKEISDNAWLVVSSKDQILFDMPYEDRYVAANQLLGIHPYNFALAQVGHS.

It belongs to the UPF0301 (AlgH) family.

The sequence is that of UPF0301 protein CGSHiEE_01530 from Haemophilus influenzae (strain PittEE).